A 358-amino-acid chain; its full sequence is Peptide chain release factor 1 (358 aa).

Gln233 carries the post-translational modification N5-methylglutamine.

It belongs to the prokaryotic/mitochondrial release factor family. Methylated by PrmC. Methylation increases the termination efficiency of RF1.

The protein resides in the cytoplasm. Its function is as follows. Peptide chain release factor 1 directs the termination of translation in response to the peptide chain termination codons UAG and UAA. The sequence is that of Peptide chain release factor 1 from Flavobacterium johnsoniae (strain ATCC 17061 / DSM 2064 / JCM 8514 / BCRC 14874 / CCUG 350202 / NBRC 14942 / NCIMB 11054 / UW101) (Cytophaga johnsonae).